Consider the following 72-residue polypeptide: Small proline-rich protein 2E (72 aa).

The segment covering 1 to 11 has biased composition (low complexity); the sequence is MSYQQQQCKQP. Residues 1 to 20 are disordered; sequence MSYQQQQCKQPCQPPPVCPT. Repeat copies occupy residues 21 to 29, 30 to 38, and 39 to 47. Residues 21 to 47 form a 3 X 9 AA tandem repeats of P-K-C-P-[EQ]-P-C-P-P region; sequence PKCPEPCPPPKCPEPCPPPKCPQPCPP. Residues 42–72 are disordered; sequence PQPCPPQQCQQKCPPVTPSPPCQPKCPPKSK. A compositionally biased stretch (pro residues) spans 56-72; sequence PVTPSPPCQPKCPPKSK.

This sequence belongs to the cornifin (SPRR) family.

It localises to the cytoplasm. Cross-linked envelope protein of keratinocytes. It is a keratinocyte protein that first appears in the cell cytosol, but ultimately becomes cross-linked to membrane proteins by transglutaminase. All that results in the formation of an insoluble envelope beneath the plasma membrane. The sequence is that of Small proline-rich protein 2E (SPRR2E) from Homo sapiens (Human).